We begin with the raw amino-acid sequence, 301 residues long: Homeobox protein Nkx-2.6 (301 aa).

Positions 22–135 are disordered; sequence ERSCPAASPH…QPKARQRRKP (114 aa). Positions 132–191 form a DNA-binding region, homeobox; the sequence is RRKPRVLFSQAQVLALERRFKQQRYLSAPEREHLASALQLTSTQVKIWFQNRRYKCKRQR.

It belongs to the NK-2 homeobox family.

The protein localises to the nucleus. Acts as a transcriptional activator. In conjunction with NKX2-5, may play a role in both pharyngeal and cardiac embryonic development. In Homo sapiens (Human), this protein is Homeobox protein Nkx-2.6 (NKX2-6).